The chain runs to 287 residues: NAD kinase (287 aa).

Catalysis depends on aspartate 56, which acts as the Proton acceptor. NAD(+) contacts are provided by residues 56–57, arginine 61, 128–129, and aspartate 156; these read DG and ND.

The protein belongs to the NAD kinase family. It depends on a divalent metal cation as a cofactor.

The protein resides in the cytoplasm. It carries out the reaction NAD(+) + ATP = ADP + NADP(+) + H(+). Functionally, involved in the regulation of the intracellular balance of NAD and NADP, and is a key enzyme in the biosynthesis of NADP. Catalyzes specifically the phosphorylation on 2'-hydroxyl of the adenosine moiety of NAD to yield NADP. This chain is NAD kinase, found in Thermomicrobium roseum (strain ATCC 27502 / DSM 5159 / P-2).